Consider the following 147-residue polypeptide: Angiogenin (147 aa).

The signal sequence occupies residues 1–24; that stretch reads MVILLGPLLLVFMLGLGLAPLSLA. Residue H37 is the Proton acceptor of the active site. TRNA-binding residues include R45 and D46. Disulfide bonds link C50/C104, C63/C115, and C81/C130. A Nucleolar localization signal motif is present at residues 55–59; sequence KQRGL. TRNA-binding residues include C104 and I126. H137 acts as the Proton donor in catalysis.

Belongs to the pancreatic ribonuclease family. In terms of assembly, homodimer. Interacts with RNH1; inhibiting ANG ribonuclease activity. Interacts with PCNA.

It is found in the secreted. The protein localises to the nucleus. It localises to the nucleolus. Its subcellular location is the cytoplasm. The protein resides in the stress granule. Its activity is regulated as follows. Has weak tRNA ribonuclease activity by itself due to partial autoinhibition by its C-terminus, which folds into a short alpha-helix that partially occludes the substrate-binding site. In absence of stress, the ribonuclease activity is inhibited by RNH1 in the cytoplasm. In response to stress, dissociates from RNH1 in the cytoplasm and associates with cytoplasmic ribosomes with vacant A-sites: ribosomes directly activate the tRNA ribonuclease activity of ANG by refolding the C-terminal alpha-helix. In response to stress, the angiogenic activity of ANG is inhibited by RNH1 in the nucleus. Its function is as follows. Secreted ribonuclease that can either promote or restrict cell proliferation of target cells, depending on the context. Endocytosed in target cells via its receptor PLXNB2 and translocates to the cytoplasm or nucleus. Under stress conditions, localizes to the cytoplasm and promotes the assembly of stress granules (SGs): specifically cleaves a subset of tRNAs within anticodon loops to produce tRNA-derived stress-induced fragments (tiRNAs), resulting in translation repression and inhibition of cell proliferation. tiRNas also prevent formation of apoptosome, thereby promoting cell survival. Preferentially cleaves RNAs between a pyrimidine and an adenosine residue, suggesting that it cleaves the anticodon loop of tRNA(Ala) (32-UUAGCAU-38) after positions 33 and 36. Cleaves a subset of tRNAs, including tRNA(Ala), tRNA(Glu), tRNA(Gly), tRNA(Lys), tRNA(Val), tRNA(His), tRNA(Asp) and tRNA(Sec). Under growth conditions and in differentiated cells, translocates to the nucleus and stimulates ribosomal RNA (rRNA) transcription, including that containing the initiation site sequences of 45S rRNA, thereby promoting cell growth and proliferation. Angiogenin induces vascularization of normal and malignant tissues via its ability to promote rRNA transcription. Involved in hematopoietic stem and progenitor cell (HSPC) growth and survival by promoting rRNA transcription in growth conditions and inhibiting translation in response to stress, respectively. Mediates the crosstalk between myeloid and intestinal epithelial cells to protect the intestinal epithelial barrier integrity: secreted by myeloid cells and promotes intestinal epithelial cells proliferation and survival. Also mediates osteoclast-endothelial cell crosstalk in growing bone: produced by osteoclasts and protects the neighboring vascular cells against senescence by promoting rRNA transcription. The protein is Angiogenin (ANG) of Sus scrofa (Pig).